The chain runs to 122 residues: Large ribosomal subunit protein bL19 (122 aa).

It belongs to the bacterial ribosomal protein bL19 family.

In terms of biological role, this protein is located at the 30S-50S ribosomal subunit interface and may play a role in the structure and function of the aminoacyl-tRNA binding site. The chain is Large ribosomal subunit protein bL19 from Chlamydia felis (strain Fe/C-56) (Chlamydophila felis).